The primary structure comprises 176 residues: Peptide deformylase (176 aa).

Residues C94 and H136 each contribute to the Fe cation site. E137 is an active-site residue. H140 is a binding site for Fe cation.

This sequence belongs to the polypeptide deformylase family. Fe(2+) is required as a cofactor.

The enzyme catalyses N-terminal N-formyl-L-methionyl-[peptide] + H2O = N-terminal L-methionyl-[peptide] + formate. Functionally, removes the formyl group from the N-terminal Met of newly synthesized proteins. Requires at least a dipeptide for an efficient rate of reaction. N-terminal L-methionine is a prerequisite for activity but the enzyme has broad specificity at other positions. The polypeptide is Peptide deformylase (Mesorhizobium japonicum (strain LMG 29417 / CECT 9101 / MAFF 303099) (Mesorhizobium loti (strain MAFF 303099))).